The following is a 429-amino-acid chain: Phosphoribosylamine--glycine ligase (429 aa).

Residues 108–315 (KDFLARHRIP…LVLLVEAALA (208 aa)) form the ATP-grasp domain. Residue 134 to 195 (LHEQGAPIVI…EEFLDGEEAS (62 aa)) participates in ATP binding. 2 residues coordinate Mg(2+): Glu285 and Asn287.

It belongs to the GARS family. Mg(2+) serves as cofactor. It depends on Mn(2+) as a cofactor.

The enzyme catalyses 5-phospho-beta-D-ribosylamine + glycine + ATP = N(1)-(5-phospho-beta-D-ribosyl)glycinamide + ADP + phosphate + H(+). It functions in the pathway purine metabolism; IMP biosynthesis via de novo pathway; N(1)-(5-phospho-D-ribosyl)glycinamide from 5-phospho-alpha-D-ribose 1-diphosphate: step 2/2. The chain is Phosphoribosylamine--glycine ligase from Pseudomonas aeruginosa (strain ATCC 15692 / DSM 22644 / CIP 104116 / JCM 14847 / LMG 12228 / 1C / PRS 101 / PAO1).